The sequence spans 108 residues: Replication restart protein PriB (108 aa).

Residues 8–108 (VDNRFSLIGK…LHAEQIEFIE (101 aa)) form the SSB domain.

Belongs to the PriB family. Homodimer. Interacts with PriA and DnaT. Component of the replication restart primosome. Primosome assembly occurs via a 'hand-off' mechanism. PriA binds to replication forks, subsequently PriB then DnaT bind; DnaT then displaces ssDNA to generate the helicase loading substrate.

Its function is as follows. Involved in the restart of stalled replication forks, which reloads the replicative helicase on sites other than the origin of replication; the PriA-PriB pathway is the major replication restart pathway. During primosome assembly it facilitates complex formation between PriA and DnaT on DNA; stabilizes PriA on DNA. Stimulates the DNA unwinding activity of PriA helicase. The sequence is that of Replication restart protein PriB from Histophilus somni (strain 2336) (Haemophilus somnus).